We begin with the raw amino-acid sequence, 548 residues long: Membrane protein insertase YidC (548 aa).

A helical transmembrane segment spans residues 6–26 (NLLVIALLFVSFMIWQAWEQD). A disordered region spans residues 28–56 (NPQPQTQQTTQTTTTAAGSAADQGVPASG). Residues 29–42 (PQPQTQQTTQTTTT) are compositionally biased toward low complexity. 4 helical membrane-spanning segments follow: residues 350 to 370 (FVGN…GIMY), 424 to 444 (FPLI…MGSI), 458 to 478 (LSAQ…MFFI), and 499 to 519 (PVIF…YYIV).

The protein belongs to the OXA1/ALB3/YidC family. Type 1 subfamily. In terms of assembly, interacts with the Sec translocase complex via SecD. Specifically interacts with transmembrane segments of nascent integral membrane proteins during membrane integration.

It is found in the cell inner membrane. Its function is as follows. Required for the insertion and/or proper folding and/or complex formation of integral membrane proteins into the membrane. Involved in integration of membrane proteins that insert both dependently and independently of the Sec translocase complex, as well as at least some lipoproteins. Aids folding of multispanning membrane proteins. The protein is Membrane protein insertase YidC of Salmonella heidelberg (strain SL476).